The sequence spans 1456 residues: MAENEKVTYGGALPPSPSTADTEVAALARSMTNASRSSVYSPEKPDGTNPFLGTDDPRMDPLSGKFEPERWTKAILQLQSSDPEGYPHHTAAVSFSDLSVYGYGRPTDHQKTVGNYFLDIPGLARDILGRKGQRIDILRNFEGVIRESEMLVVLGRPGSGCTTLLKTIAGETHGFWITDNSHINYQGISFKRMHKQFRGEVIYNAENDVHFPNMTVGQTLRFAAEARTPRTRLPGVSRSQWAEHMKDVVMSIFGLTHTVNTKVGNDFVRGVSGGERKRVSIAEVALSGSPLQCWDNSTRGLDSATALEFVKSLRLSSKYAGATAVVAIYQASQAIYDLFDKVVVLYEGQQIYFGRADRAKQFFIDMGFECPPRQTTADFLTSLTNPGECLPRPGFEGRVPRTADEFAAAWRNSRDRQELLQEIERFNDEFPEDGEHLEKFKKARKLIQAKGSQSPYTLSTPMQIRLCLKRAWQRFMADTSNFLTSVIGNFILALIISSIFYNLPQNTLSFYSRGALLFFAILMNAFASSLEILQIYEQRPIVEKHKRMALYHPYADAIASVLCDLPGKVIASFAFNLVLYFMTNLRRTPGAFFTFYLFSLMCILVMSMIFRTIGATSKTISQAMAPSSVILLALVIFTGFTIPTRDMLGWSRWINYINPIGYAFESIMVNEFDGREYACGDFIPTGPGYTDVPATSRVCASAGAVFGSDVVEGAAYIATAYEYFPQHKWRNLGILFGFIAFFACTYLFATEFIAASKSKGEVLVFRRGHVPLKKEGASEDEEAGTGSTGTRTQEEPVDKDANIAGIQRQVATFHWEDVIYDIKIKGQPRRILDHVDGWVRPGTLTALMGASGAGKTTLLDTLANRVTMGVVEGKMQVDGHDRDSSFQRNTGYVQQQDLHLQTSTVREAMLFSARLRQPHTVPDAEKAAYVEEVIHLLEMQKYADAIVGVPGEGLNVEQRKRLTIGVELVAKPQLLLFLDEPTSGLDSQTAWSICTLLRKLANNGQAILCTIHQPSAMLFQSFDRLLLLQRGGQTVYFGDIGENSRTIIDYFEGQGADPCPHSANPAEWMLSVIGAAPGAVAKRDYYEAWRGSEAYRAVKEELRQMRENPKPISQESTDALRVYAAPFHVQLFHVTFRFYQQLYRTPSYIYSKIFLVAGSNLLIGFSFFNAHNTIQGLQNQMYSVFMGLTVFGNLVNQIMPHFVTQRSLYEVRERPSRAYSWVVFMLSNVLGELPWNTLAGVVLFFCWYYPVGMYRNAEVTHAVTERGGLMFLLIWQFMLFTSTFAHMLIAGVDSDVTGGNIASLLFSLTFLFCGVLAGPSGPNAFPRFWIFMYRLSPFTYLVEAMVSVGVANAPAFCSDIEVRHFEPPSGETCGQYLQQYMSVNDGSLANPNATADCQFCQQTTTNSFLTGIHSSYAHRWRNFGFLWVFILFNIGMAVFFYWLARVPKGSRVKKQK.

Positions 1–65 (MAENEKVTYG…DPRMDPLSGK (65 aa)) are disordered. Polar residues predominate over residues 30–40 (SMTNASRSSVY). The 255-residue stretch at 118-372 (LDIPGLARDI…FIDMGFECPP (255 aa)) folds into the ABC transporter 1 domain. Transmembrane regions (helical) follow at residues 481–501 (NFLT…SIFY), 515–535 (ALLF…ILQI), 561–581 (VLCD…VLYF), 590–610 (GAFF…SMIF), 623–643 (AMAP…FTIP), and 734–754 (ILFG…EFIA). The segment at 775–799 (EGASEDEEAGTGSTGTRTQEEPVDK) is disordered. Residues 813–1056 (FHWEDVIYDI…IIDYFEGQGA (244 aa)) enclose the ABC transporter 2 domain. An ATP-binding site is contributed by 849-856 (GASGAGKT). Transmembrane regions (helical) follow at residues 1148 to 1168 (YIYS…FSFF), 1184 to 1204 (VFMG…HFVT), 1233 to 1253 (LPWN…PVGM), 1269 to 1289 (LMFL…HMLI), 1301 to 1321 (IASL…GPSG), 1337 to 1357 (PFTY…PAFC), and 1423 to 1443 (FGFL…FYWL).

It belongs to the ABC transporter superfamily. ABCG family. PDR (TC 3.A.1.205) subfamily.

The protein resides in the membrane. ABC-type transporter; part of the gene cluster that mediates the biosynthesis of erinacines, cyathane-xylosides that show unique biological activities, including leishmanicidal activity, stimulating activity for nerve growth-factor synthesis, and agonistic activity toward the kappa opioid receptor. In Hericium erinaceus (Lion's mane mushroom), this protein is ABC-type transporter eriD.